The sequence spans 164 residues: Phosphopantetheine adenylyltransferase (164 aa).

Serine 10 contributes to the substrate binding site. ATP is bound by residues 10 to 11 (SF) and histidine 18. Residues lysine 42, leucine 74, and arginine 88 each contribute to the substrate site. Residues 89–91 (GLR), glutamate 99, and 124–130 (YSFLSSS) each bind ATP.

It belongs to the bacterial CoaD family. In terms of assembly, homohexamer. Mg(2+) serves as cofactor.

The protein localises to the cytoplasm. The catalysed reaction is (R)-4'-phosphopantetheine + ATP + H(+) = 3'-dephospho-CoA + diphosphate. The protein operates within cofactor biosynthesis; coenzyme A biosynthesis; CoA from (R)-pantothenate: step 4/5. Reversibly transfers an adenylyl group from ATP to 4'-phosphopantetheine, yielding dephospho-CoA (dPCoA) and pyrophosphate. This Exiguobacterium sp. (strain ATCC BAA-1283 / AT1b) protein is Phosphopantetheine adenylyltransferase.